The chain runs to 669 residues: DNA ligase (669 aa).

NAD(+)-binding positions include 35 to 39 (DSEYD), 84 to 85 (SL), and Glu-114. Lys-116 (N6-AMP-lysine intermediate) is an active-site residue. NAD(+) contacts are provided by Arg-137, Glu-171, Lys-287, and Lys-311. Zn(2+) contacts are provided by Cys-405, Cys-408, Cys-423, and Cys-428. Residues 591-669 (DSDSYFAGKT…EAQLLGELKK (79 aa)) form the BRCT domain.

Belongs to the NAD-dependent DNA ligase family. LigA subfamily. Mg(2+) is required as a cofactor. The cofactor is Mn(2+).

The catalysed reaction is NAD(+) + (deoxyribonucleotide)n-3'-hydroxyl + 5'-phospho-(deoxyribonucleotide)m = (deoxyribonucleotide)n+m + AMP + beta-nicotinamide D-nucleotide.. Functionally, DNA ligase that catalyzes the formation of phosphodiester linkages between 5'-phosphoryl and 3'-hydroxyl groups in double-stranded DNA using NAD as a coenzyme and as the energy source for the reaction. It is essential for DNA replication and repair of damaged DNA. The chain is DNA ligase from Bacillus velezensis (strain DSM 23117 / BGSC 10A6 / LMG 26770 / FZB42) (Bacillus amyloliquefaciens subsp. plantarum).